A 149-amino-acid chain; its full sequence is Arginine repressor (149 aa).

Belongs to the ArgR family.

The protein resides in the cytoplasm. It participates in amino-acid biosynthesis; L-arginine biosynthesis [regulation]. Its function is as follows. Regulates arginine biosynthesis genes. The protein is Arginine repressor of Alkaliphilus oremlandii (strain OhILAs) (Clostridium oremlandii (strain OhILAs)).